Here is a 157-residue protein sequence, read N- to C-terminus: Protein NrdI (157 aa).

This sequence belongs to the NrdI family.

In terms of biological role, probably involved in ribonucleotide reductase function. The chain is Protein NrdI from Mycoplasma mycoides subsp. mycoides SC (strain CCUG 32753 / NCTC 10114 / PG1).